Consider the following 413-residue polypeptide: uncharacterized protein (413 aa).

This is an uncharacterized protein from Mycoplasma pneumoniae (strain ATCC 29342 / M129 / Subtype 1) (Mycoplasmoides pneumoniae).